A 471-amino-acid polypeptide reads, in one-letter code: Iroquois-class homeodomain protein IRX-2 (471 aa).

Positions 112 to 175 form a DNA-binding region, homeobox; TALE-type; it reads LNDPAYRKNA…ANARRRLKKE (64 aa). 2 disordered regions span residues 176–373 and 424–471; these read NKMT…SPYP and APKA…QPYL. Phosphoserine is present on Ser-186. Residues 195 to 209 are compositionally biased toward basic and acidic residues; it reads DATRSKDESPDKAQE. A compositionally biased stretch (acidic residues) spans 261–273; the sequence is DDLEDDEDDDEEG. Low complexity predominate over residues 355 to 367; that stretch reads PAAAAPASTGAPP. Residues 462–471 are compositionally biased toward gly residues; the sequence is VVGGGVQPYL.

The protein belongs to the TALE/IRO homeobox family.

The protein resides in the nucleus. The chain is Iroquois-class homeodomain protein IRX-2 (IRX2) from Homo sapiens (Human).